The chain runs to 258 residues: MTKTAVITGSTSGIGLAIARTLAKAGANIVLNGFGAPDEIRTVTDEVAGLSSGTVLHHPADMTKPSEIADMMAMVADRFGGADILVNNAGVQFVEKIEDFPVEQWDRIIAVNLSSSFHTIRGAIPPMKKKGWGRIINIASAHGLVASPFKSAYVAAKHGIMGLTKTVALEVAESGVTVNSICPGYVLTPLVEKQIPDQARTRGITEEQVINEVMLKGQPTKKFITVEQVASLALYLAGDDAAQITGTHVSMDGGWTAQ.

6–30 (VITGSTSGIGLAIARTLAKAGANIV) contacts NAD(+). Residue S140 coordinates substrate. Y153 acts as the Proton acceptor in catalysis.

This sequence belongs to the short-chain dehydrogenases/reductases (SDR) family.

It catalyses the reaction (R)-3-hydroxybutanoate + NAD(+) = acetoacetate + NADH + H(+). The sequence is that of D-beta-hydroxybutyrate dehydrogenase (bdhA) from Rhizobium meliloti (strain 1021) (Ensifer meliloti).